Reading from the N-terminus, the 435-residue chain is D-inositol 3-phosphate glycosyltransferase (435 aa).

A 1D-myo-inositol 3-phosphate-binding site is contributed by H16. Residues 22–23 and G30 each bind UDP-N-acetyl-alpha-D-glucosamine; that span reads QP. Residues 27–32, K85, Y118, T142, and R162 each bind 1D-myo-inositol 3-phosphate; that span reads DAGGMN. 3 residues coordinate UDP-N-acetyl-alpha-D-glucosamine: R237, K242, and V303. Residues Y312, R313, and A315 each coordinate Mg(2+). The UDP-N-acetyl-alpha-D-glucosamine site is built by E325 and E333. Mg(2+) is bound at residue T339.

Belongs to the glycosyltransferase group 1 family. MshA subfamily. Homodimer.

It catalyses the reaction 1D-myo-inositol 3-phosphate + UDP-N-acetyl-alpha-D-glucosamine = 1D-myo-inositol 2-acetamido-2-deoxy-alpha-D-glucopyranoside 3-phosphate + UDP + H(+). Its function is as follows. Catalyzes the transfer of a N-acetyl-glucosamine moiety to 1D-myo-inositol 3-phosphate to produce 1D-myo-inositol 2-acetamido-2-deoxy-glucopyranoside 3-phosphate in the mycothiol biosynthesis pathway. In Kineococcus radiotolerans (strain ATCC BAA-149 / DSM 14245 / SRS30216), this protein is D-inositol 3-phosphate glycosyltransferase.